The sequence spans 205 residues: Thiamine-phosphate synthase (205 aa).

Residues 37 to 41 and Asn-69 each bind 4-amino-2-methyl-5-(diphosphooxymethyl)pyrimidine; that span reads QVREK. Residues Asp-70 and Asp-89 each contribute to the Mg(2+) site. Residue Ser-108 coordinates 4-amino-2-methyl-5-(diphosphooxymethyl)pyrimidine. 134 to 136 contacts 2-[(2R,5Z)-2-carboxy-4-methylthiazol-5(2H)-ylidene]ethyl phosphate; the sequence is TGS. Lys-137 is a 4-amino-2-methyl-5-(diphosphooxymethyl)pyrimidine binding site. Residues Gly-165 and 185 to 186 each bind 2-[(2R,5Z)-2-carboxy-4-methylthiazol-5(2H)-ylidene]ethyl phosphate; that span reads IS.

The protein belongs to the thiamine-phosphate synthase family. The cofactor is Mg(2+).

The catalysed reaction is 2-[(2R,5Z)-2-carboxy-4-methylthiazol-5(2H)-ylidene]ethyl phosphate + 4-amino-2-methyl-5-(diphosphooxymethyl)pyrimidine + 2 H(+) = thiamine phosphate + CO2 + diphosphate. The enzyme catalyses 2-(2-carboxy-4-methylthiazol-5-yl)ethyl phosphate + 4-amino-2-methyl-5-(diphosphooxymethyl)pyrimidine + 2 H(+) = thiamine phosphate + CO2 + diphosphate. It catalyses the reaction 4-methyl-5-(2-phosphooxyethyl)-thiazole + 4-amino-2-methyl-5-(diphosphooxymethyl)pyrimidine + H(+) = thiamine phosphate + diphosphate. It participates in cofactor biosynthesis; thiamine diphosphate biosynthesis; thiamine phosphate from 4-amino-2-methyl-5-diphosphomethylpyrimidine and 4-methyl-5-(2-phosphoethyl)-thiazole: step 1/1. In terms of biological role, condenses 4-methyl-5-(beta-hydroxyethyl)thiazole monophosphate (THZ-P) and 2-methyl-4-amino-5-hydroxymethyl pyrimidine pyrophosphate (HMP-PP) to form thiamine monophosphate (TMP). The chain is Thiamine-phosphate synthase from Clostridium botulinum (strain ATCC 19397 / Type A).